The following is a 118-amino-acid chain: MARIAGVNIPENKHTVISLTYIFGIGRTRAESICATTGIEQTAKVRELTGEQLDAIRGEVAKFSTEGDLRREINMNIKRLMDLGCYRGIRHRRGLPLRGQRTKTNARTRKGPRKPIRK.

The tract at residues 94–118 (GLPLRGQRTKTNARTRKGPRKPIRK) is disordered.

This sequence belongs to the universal ribosomal protein uS13 family. In terms of assembly, part of the 30S ribosomal subunit. Forms a loose heterodimer with protein S19. Forms two bridges to the 50S subunit in the 70S ribosome.

Functionally, located at the top of the head of the 30S subunit, it contacts several helices of the 16S rRNA. In the 70S ribosome it contacts the 23S rRNA (bridge B1a) and protein L5 of the 50S subunit (bridge B1b), connecting the 2 subunits; these bridges are implicated in subunit movement. Contacts the tRNAs in the A and P-sites. The sequence is that of Small ribosomal subunit protein uS13 from Alcanivorax borkumensis (strain ATCC 700651 / DSM 11573 / NCIMB 13689 / SK2).